A 631-amino-acid polypeptide reads, in one-letter code: Phosphomethylpyrimidine synthase (631 aa).

Substrate-binding positions include asparagine 239, methionine 268, tyrosine 297, histidine 333, 353–355 (SRG), 394–397 (DGLR), and glutamate 433. Zn(2+) is bound at residue histidine 437. Tyrosine 460 contacts substrate. Histidine 501 is a Zn(2+) binding site. The [4Fe-4S] cluster site is built by cysteine 581, cysteine 584, and cysteine 589.

The protein belongs to the ThiC family. Homodimer. It depends on [4Fe-4S] cluster as a cofactor.

The enzyme catalyses 5-amino-1-(5-phospho-beta-D-ribosyl)imidazole + S-adenosyl-L-methionine = 4-amino-2-methyl-5-(phosphooxymethyl)pyrimidine + CO + 5'-deoxyadenosine + formate + L-methionine + 3 H(+). It functions in the pathway cofactor biosynthesis; thiamine diphosphate biosynthesis. In terms of biological role, catalyzes the synthesis of the hydroxymethylpyrimidine phosphate (HMP-P) moiety of thiamine from aminoimidazole ribotide (AIR) in a radical S-adenosyl-L-methionine (SAM)-dependent reaction. The protein is Phosphomethylpyrimidine synthase of Salmonella heidelberg (strain SL476).